The primary structure comprises 847 residues: Alpha-glucuronidase A (847 aa).

An N-terminal signal peptide occupies residues 1 to 22; the sequence is MRSFLLLTALLGVAAVAEDGLA. Residues asparagine 48, asparagine 78, asparagine 227, asparagine 315, asparagine 349, asparagine 457, asparagine 472, asparagine 534, asparagine 583, asparagine 689, asparagine 738, asparagine 739, and asparagine 769 are each glycosylated (N-linked (GlcNAc...) asparagine).

The protein belongs to the glycosyl hydrolase 67 family.

Its subcellular location is the secreted. The catalysed reaction is an alpha-D-glucuronoside + H2O = D-glucuronate + an alcohol. Functionally, alpha-glucuronidase involved in the hydrolysis of xylan, a major structural heterogeneous polysaccharide found in plant biomass representing the second most abundant polysaccharide in the biosphere, after cellulose. Releases 4-O-methylglucuronic acid from xylan. This chain is Alpha-glucuronidase A (aguA), found in Emericella nidulans (strain FGSC A4 / ATCC 38163 / CBS 112.46 / NRRL 194 / M139) (Aspergillus nidulans).